We begin with the raw amino-acid sequence, 339 residues long: Cathepsin B (339 aa).

The first 17 residues, 1-17 (MWWSLIPLSCLLALTSA), serve as a signal peptide directing secretion. Residues 18-79 (HDKPSSHPLS…ERVGFSEDIN (62 aa)) constitute a propeptide, activation peptide. Intrachain disulfides connect Cys-93/Cys-122, Cys-105/Cys-150, Cys-141/Cys-207, Cys-142/Cys-146, Cys-179/Cys-211, and Cys-187/Cys-198. Cys-108 is an active-site residue. The N-linked (GlcNAc...) asparagine glycan is linked to Asn-192. Lys-220 is modified (N6-acetyllysine). Residues His-278 and Asn-298 contribute to the active site. The propeptide occupies 334-339 (QYWGRF).

This sequence belongs to the peptidase C1 family. In terms of assembly, dimer of a heavy chain and a light chain cross-linked by a disulfide bond. Interacts with SRPX2. Directly interacts with SHKBP1. In terms of tissue distribution, expressed in the epithelial cells of the prostate and mammary gland.

It is found in the lysosome. It localises to the melanosome. Its subcellular location is the secreted. The protein resides in the extracellular space. The protein localises to the apical cell membrane. It catalyses the reaction Hydrolysis of proteins with broad specificity for peptide bonds. Preferentially cleaves -Arg-Arg-|-Xaa bonds in small molecule substrates (thus differing from cathepsin L). In addition to being an endopeptidase, shows peptidyl-dipeptidase activity, liberating C-terminal dipeptides.. Functionally, thiol protease which is believed to participate in intracellular degradation and turnover of proteins. Cleaves matrix extracellular phosphoglycoprotein MEPE. Involved in the solubilization of cross-linked TG/thyroglobulin in the thyroid follicle lumen. Has also been implicated in tumor invasion and metastasis. The sequence is that of Cathepsin B (Ctsb) from Rattus norvegicus (Rat).